Reading from the N-terminus, the 403-residue chain is Synaptotagmin-7 (403 aa).

At 1–16 (MYRDPEAASPGAPSRD) the chain is on the vesicular side. A helical membrane pass occupies residues 17 to 37 (VLLVSAIITVSLSVTVVLCGL). At 38-403 (CHWCQRKLGK…PVAQWHQLKA (366 aa)) the chain is on the cytoplasmic side. The residue at position 52 (S52) is a Phosphoserine. Residues 53–106 (LETVGTPDSGRGRSEKKAIKLPAGGKAVNTAPVPGQTPHDESDRRTEPRSSVSD) are disordered. Residue T58 is modified to Phosphothreonine. Position 61 is a phosphoserine (S61). Positions 90 to 100 (PHDESDRRTEP) are enriched in basic and acidic residues. Residues S119 and S122 each carry the phosphoserine modification. C2 domains follow at residues 135-255 (NLGR…TFWK) and 266-399 (SRGE…AQWH). Positions 166, 172, 225, 227, 230, 233, 297, 303, 357, 359, 362, and 365 each coordinate Ca(2+).

The protein belongs to the synaptotagmin family. In terms of assembly, homodimer. Can also form heterodimers with SYT6, SYT9 and SYT10. Interacts with calmodulin (CALM1, CALM2 or CALM3). Interacts with CD63; required for localization to lysosomes. Interacts with APP. The cofactor is Ca(2+). Post-translationally, palmitoylated at its vesicular N-terminus; palmitoylation is required for localization to lysosome and phagocytosis in macrophages. In terms of tissue distribution, expressed in a variety of adult and fetal tissues.

It localises to the cell membrane. It is found in the presynaptic cell membrane. The protein localises to the cytoplasmic vesicle. The protein resides in the secretory vesicle. Its subcellular location is the synaptic vesicle membrane. It localises to the lysosome membrane. It is found in the phagosome membrane. The protein localises to the peroxisome membrane. The protein resides in the secretory vesicle membrane. Its function is as follows. Ca(2+) sensor involved in Ca(2+)-dependent exocytosis of secretory and synaptic vesicles through Ca(2+) and phospholipid binding to the C2 domain. Ca(2+) induces binding of the C2-domains to phospholipid membranes and to assembled SNARE-complexes; both actions contribute to triggering exocytosis. SYT7 binds Ca(2+) with high affinity and slow kinetics compared to other synaptotagmins. Involved in Ca(2+)-triggered lysosomal exocytosis, a major component of the plasma membrane repair. Ca(2+)-regulated delivery of lysosomal membranes to the cell surface is also involved in the phagocytic uptake of particles by macrophages. Ca(2+)-triggered lysosomal exocytosis also plays a role in bone remodeling by regulating secretory pathways in osteoclasts and osteoblasts. In case of infection, involved in participates cell invasion by Trypanosoma cruzi via Ca(2+)-triggered lysosomal exocytosis. Involved in cholesterol transport from lysosome to peroxisome by promoting membrane contacts between lysosomes and peroxisomes: probably acts by promoting vesicle fusion by binding phosphatidylinositol-4,5-bisphosphate on peroxisomal membranes. Acts as a key mediator of synaptic facilitation, a process also named short-term synaptic potentiation: synaptic facilitation takes place at synapses with a low initial release probability and is caused by influx of Ca(2+) into the axon terminal after spike generation, increasing the release probability of neurotransmitters. Probably mediates synaptic facilitation by directly increasing the probability of release. May also contribute to synaptic facilitation by regulating synaptic vesicle replenishment, a process required to ensure that synaptic vesicles are ready for the arrival of the next action potential: SYT7 is required for synaptic vesicle replenishment by acting as a sensor for Ca(2+) and by forming a complex with calmodulin. Also acts as a regulator of Ca(2+)-dependent insulin and glucagon secretion in beta-cells. Triggers exocytosis by promoting fusion pore opening and fusion pore expansion in chromaffin cells. Also regulates the secretion of some non-synaptic secretory granules of specialized cells. This is Synaptotagmin-7 from Homo sapiens (Human).